We begin with the raw amino-acid sequence, 447 residues long: UDP-N-acetylglucosamine 1-carboxyvinyltransferase (447 aa).

Lysine 27–asparagine 28 contacts phosphoenolpyruvate. Arginine 97 is a binding site for UDP-N-acetyl-alpha-D-glucosamine. Residue cysteine 121 is the Proton donor of the active site. A 2-(S-cysteinyl)pyruvic acid O-phosphothioketal modification is found at cysteine 121. UDP-N-acetyl-alpha-D-glucosamine contacts are provided by residues arginine 126–leucine 130, aspartate 314, and valine 336.

The protein belongs to the EPSP synthase family. MurA subfamily.

It localises to the cytoplasm. It catalyses the reaction phosphoenolpyruvate + UDP-N-acetyl-alpha-D-glucosamine = UDP-N-acetyl-3-O-(1-carboxyvinyl)-alpha-D-glucosamine + phosphate. The protein operates within cell wall biogenesis; peptidoglycan biosynthesis. Cell wall formation. Adds enolpyruvyl to UDP-N-acetylglucosamine. This Nostoc sp. (strain PCC 7120 / SAG 25.82 / UTEX 2576) protein is UDP-N-acetylglucosamine 1-carboxyvinyltransferase.